A 68-amino-acid chain; its full sequence is Amphipathic peptide VmCT1 (68 aa).

The signal sequence occupies residues 1–23 (MKTQFVILIVAVVLLQLISHSEA). At Phe36 the chain carries Phenylalanine amide. Positions 40–68 (GLRNFDDLDDTFEPEMSEADLKYLQDLLR) are excised as a propeptide.

The protein belongs to the non-disulfide-bridged peptide (NDBP) superfamily. Short antimicrobial peptide (group 4) family. Expressed by the venom gland.

It localises to the secreted. The protein resides in the target cell membrane. In terms of biological role, cationic amphipathic peptide with antibacterial activities against both Gram-positive and Gram-negative bacteria. Also shows antifungal activities. Is mildly hemolytic against human erythrocytes. In addition, when tested in vitro on the parasite Trypanosoma cruzi (responsible of the Chagas disease), is able to reduce the number of the three forms (epimastigote, trypomastigote and amastigote). Also shows antiplasmodial and cytotoxic activity (tested on Plasmodium gallinaceum, and MCF-7 breast cancer cell line). This chain is Amphipathic peptide VmCT1, found in Vaejovis mexicanus smithi (Mexican scorpion).